The sequence spans 271 residues: uncharacterized protein (271 aa).

Residues 1–20 (MPDLHTLPAGSRPERAIRNN) form a disordered region.

The protein belongs to the PEP2 family.

This is an uncharacterized protein from Aspergillus terreus (strain NIH 2624 / FGSC A1156).